The chain runs to 311 residues: Telomere-binding protein I1 homolog (311 aa).

The protein belongs to the chordopoxvirinae I1 family.

Its subcellular location is the virion. In terms of biological role, late DNA-binding protein which binds to the hairpin form of the viral telomeric sequence. Required for the production of mature virions (MV). The polypeptide is Telomere-binding protein I1 homolog (Fowlpox virus (strain NVSL) (FPV)).